The sequence spans 431 residues: Phosphoribosylamine--glycine ligase (431 aa).

The ATP-grasp domain occupies 107–315 (RWLMEEYKIP…LVEIGEEIVD (209 aa)). ATP is bound at residue 134 to 193 (IDDFGRPVVVKPLGLTGGKGVKVVGYQLKDNEEAKAYAEELIKRDGKVLIEERTDGVEFT). Residues Q273, E285, and N287 each coordinate Mg(2+). Positions 273, 285, and 287 each coordinate Mn(2+).

The protein belongs to the GARS family. Mg(2+) is required as a cofactor. It depends on Mn(2+) as a cofactor.

The enzyme catalyses 5-phospho-beta-D-ribosylamine + glycine + ATP = N(1)-(5-phospho-beta-D-ribosyl)glycinamide + ADP + phosphate + H(+). Its pathway is purine metabolism; IMP biosynthesis via de novo pathway; N(1)-(5-phospho-D-ribosyl)glycinamide from 5-phospho-alpha-D-ribose 1-diphosphate: step 2/2. This Thermococcus kodakarensis (strain ATCC BAA-918 / JCM 12380 / KOD1) (Pyrococcus kodakaraensis (strain KOD1)) protein is Phosphoribosylamine--glycine ligase.